A 446-amino-acid polypeptide reads, in one-letter code: Trigger factor (446 aa).

A PPIase FKBP-type domain is found at G163–A248. The interval S423–A446 is disordered. Residues G432–A446 show a composition bias toward low complexity.

It belongs to the FKBP-type PPIase family. Tig subfamily.

The protein resides in the cytoplasm. It catalyses the reaction [protein]-peptidylproline (omega=180) = [protein]-peptidylproline (omega=0). Functionally, involved in protein export. Acts as a chaperone by maintaining the newly synthesized protein in an open conformation. Functions as a peptidyl-prolyl cis-trans isomerase. The sequence is that of Trigger factor from Moorella thermoacetica (strain ATCC 39073 / JCM 9320).